The following is a 377-amino-acid chain: Guanine nucleotide-binding protein subunit beta-1 (377 aa).

WD repeat units follow at residues 63–93, 105–135, 154–185, 202–233, 246–276, 293–323, and 339–369; these read GHTG…IVWN, LPCA…SIFN, GHKG…VLWD, GHTA…RLWD, GHEG…RLFD, GDIP…YVWD, and SHEG…KIWA.

This sequence belongs to the WD repeat G protein beta family. As to quaternary structure, g proteins are composed of 3 units, alpha, beta and gamma.

Guanine nucleotide-binding proteins (G proteins) are involved as a modulator or transducer in various transmembrane signaling systems. The beta and gamma chains are required for the GTPase activity, for replacement of GDP by GTP, and for G protein-effector interaction. This Nicotiana tabacum (Common tobacco) protein is Guanine nucleotide-binding protein subunit beta-1.